The primary structure comprises 283 residues: 5'-nucleotidase SurE (283 aa).

A divalent metal cation-binding residues include Asp14, Asp15, Ser47, and Asn105.

This sequence belongs to the SurE nucleotidase family. Requires a divalent metal cation as cofactor.

Its subcellular location is the cytoplasm. It carries out the reaction a ribonucleoside 5'-phosphate + H2O = a ribonucleoside + phosphate. Nucleotidase that shows phosphatase activity on nucleoside 5'-monophosphates. The protein is 5'-nucleotidase SurE of Chlamydia trachomatis serovar D (strain ATCC VR-885 / DSM 19411 / UW-3/Cx).